The primary structure comprises 710 residues: Chaperonin-containing T-complex member BBS12 (710 aa).

This sequence belongs to the TCP-1 chaperonin family. BBS12 subfamily. In terms of assembly, component of the chaperonin-containing T-complex (TRiC), a heterooligomeric complex of about 850 to 900 kDa that forms two stacked rings, 12 to 16 nm in diameter. Interacts with MKKS.

Its subcellular location is the cell projection. It is found in the cilium. Component of the chaperonin-containing T-complex (TRiC), a molecular chaperone complex that assists the folding of proteins upon ATP hydrolysis. As part of the TRiC complex may play a role in the assembly of BBSome, a complex involved in ciliogenesis regulating transports vesicles to the cilia. Involved in adipogenic differentiation. In Homo sapiens (Human), this protein is Chaperonin-containing T-complex member BBS12 (BBS12).